Consider the following 420-residue polypeptide: MFALIDVNGMYASCEQAFRPDLANRAVAVLSNNDGNIVARNYLAKKAGLKMGDPYFKVRPIIERHNIAIFSSNYTLYASMSARFAAVVESLASHVEQYSIDELFVDCKGITAAMSLDAFGRQLREEVRRHTTLVCGVGIARTKTLAKLCNHAAKTWPATGGVVALDDGARLKKLMSILPVAEVWGVGHRTEKALATMGIKTVLDLARADTRLIRKTFGVVLERTVRELRGEACFSLEENPPAKQQIVVSRSFGQRVETLTDMQQAVTGFAARAAEKLRNERQYCRVISVFIRTSPYSVRDTQYANQATEKLTVATQDSRTIIQAAQALARIWREDIAYAKAGVMLADFSGKEAQLDLFDSATPSAGSEALMAVLDGINRRGKNQLFFAGQGIDNSFAMRRQMLSPDYTTDWRSIPIATIK.

The region spanning 2-187 is the UmuC domain; it reads FALIDVNGMY…LPVAEVWGVG (186 aa).

The protein belongs to the DNA polymerase type-Y family.

Functionally, involved in UV protection and mutation. The sequence is that of Protein MucB (mucB) from Escherichia coli.